A 270-amino-acid polypeptide reads, in one-letter code: uncharacterized protein (270 aa).

Positions 1–22 (MEYIKKIALYMSVLLLIIFIGG) are cleaved as a signal peptide. Cys23 carries the N-palmitoyl cysteine lipid modification. Cys23 carries the S-diacylglycerol cysteine lipid modification.

Belongs to the staphylococcal tandem lipoprotein family.

The protein resides in the cell membrane. This is an uncharacterized protein from Staphylococcus aureus (strain USA300).